The chain runs to 443 residues: MSEMTPREIVSELNRHIIGQDKAKRAVAIALRNRWRRMQLEESLRVEVTPKNILMIGPTGVGKTEIARRLAKLANVPFIKVEATKFTEVGYVGKEVESIIRDLTDVAVKLTHQQAMEKVKFRAEELAEERVLDALLPPPRDAWGQAEQKEENSSTRQVFRKKLREGQLNDKEIEINVAVPQMGVEIMAPPGMEEMTNQLQGLFQNLAGDTKKKRKMKIKDALKALVEEEAAKLVNQEELKEQAIYNVENNGIVFIDEIDKICKRGEVSGPDVSREGVQRDLLPLIEGSTVSTKHGMVRTDHILFIASGAFQVAKPSDLIPELQGRLPIRVELEALSSNDFKRILTEPKASLTEQYVALMKTEQVDVQFTEDGIKQIADAAWQVNETTENIGARRLHTVLERLMDEISFDATEKAGQAFVIDAAYVKARLGELVEDEDLSRFIL.

Residues Ile-18, 60 to 65, Asp-256, Glu-321, and Arg-393 each bind ATP; that span reads GVGKTE.

It belongs to the ClpX chaperone family. HslU subfamily. As to quaternary structure, a double ring-shaped homohexamer of HslV is capped on each side by a ring-shaped HslU homohexamer. The assembly of the HslU/HslV complex is dependent on binding of ATP.

The protein localises to the cytoplasm. Functionally, ATPase subunit of a proteasome-like degradation complex; this subunit has chaperone activity. The binding of ATP and its subsequent hydrolysis by HslU are essential for unfolding of protein substrates subsequently hydrolyzed by HslV. HslU recognizes the N-terminal part of its protein substrates and unfolds these before they are guided to HslV for hydrolysis. This chain is ATP-dependent protease ATPase subunit HslU, found in Vibrio cholerae serotype O1 (strain ATCC 39315 / El Tor Inaba N16961).